A 611-amino-acid chain; its full sequence is CRS2-associated factor 2, chloroplastic (611 aa).

The N-terminal 58 residues, 1–58 (MPPPPPQRPASSHVGRANLFSASPPPLSNRRYPHHRSLPLPPVSPRRRDPKKHSQQPS), are a transit peptide targeting the chloroplast. Residues 1-72 (MPPPPPQRPA…TDSGPTRTVT (72 aa)) are disordered. Over residues 55–72 (QQPSQEEPTDSGPTRTVT) the composition is skewed to polar residues. 2 consecutive CRM domains span residues 232-328 (EPLT…TRPR) and 350-446 (DGFT…YSKP). Residues 486–509 (KMFKLWKSAVDSSLALLLDDAEAN) are CRS2 binding. The interval 554–578 (MNDEPETSVAGNEEGQLEQSPDLRD) is disordered.

In terms of assembly, interacts with CRS2 and RNA. Part of large ribonucleo-protein complexes that include group IIB introns, CRS2 and CAF2.

The protein localises to the plastid. It localises to the chloroplast stroma. Required for the splicing of group IIB introns in chloroplasts. Forms splicing particles with CRS2. Interacts with RNA and confers intron specificity of the splicing particles. This chain is CRS2-associated factor 2, chloroplastic (CAF2), found in Zea mays (Maize).